Reading from the N-terminus, the 384-residue chain is tRNA-specific 2-thiouridylase MnmA (384 aa).

ATP contacts are provided by residues 30–37 and Met56; that span reads GMSGGVDS. Residues 116-118 form an interaction with target base in tRNA region; sequence NPD. Cys121 functions as the Nucleophile in the catalytic mechanism. Cys121 and Cys218 are oxidised to a cystine. Gly146 is an ATP binding site. The interaction with tRNA stretch occupies residues 168 to 170; that stretch reads KDQ. Residue Cys218 is the Cysteine persulfide intermediate of the active site. An interaction with tRNA region spans residues 330–331; that stretch reads RY.

It belongs to the MnmA/TRMU family.

Its subcellular location is the cytoplasm. It catalyses the reaction S-sulfanyl-L-cysteinyl-[protein] + uridine(34) in tRNA + AH2 + ATP = 2-thiouridine(34) in tRNA + L-cysteinyl-[protein] + A + AMP + diphosphate + H(+). Functionally, catalyzes the 2-thiolation of uridine at the wobble position (U34) of tRNA, leading to the formation of s(2)U34. The chain is tRNA-specific 2-thiouridylase MnmA from Haemophilus ducreyi (strain 35000HP / ATCC 700724).